A 1328-amino-acid chain; its full sequence is DNA-directed RNA polymerase subunit beta (1328 aa).

This sequence belongs to the RNA polymerase beta chain family. As to quaternary structure, the RNAP catalytic core consists of 2 alpha, 1 beta, 1 beta' and 1 omega subunit. When a sigma factor is associated with the core the holoenzyme is formed, which can initiate transcription.

It catalyses the reaction RNA(n) + a ribonucleoside 5'-triphosphate = RNA(n+1) + diphosphate. Its function is as follows. DNA-dependent RNA polymerase catalyzes the transcription of DNA into RNA using the four ribonucleoside triphosphates as substrates. This is DNA-directed RNA polymerase subunit beta from Karelsulcia muelleri (strain GWSS) (Sulcia muelleri).